The following is an 817-amino-acid chain: Two pore calcium channel protein 1 (817 aa).

Residues Met-1–Glu-113 are Cytoplasmic-facing. Residues Ser-20 to Gly-65 form a disordered region. Polar residues predominate over residues Ser-26 to Ser-51. A helical transmembrane segment spans residues Leu-114–Leu-134. Over Lys-135–His-137 the chain is Extracellular. The chain crosses the membrane as a helical span at residues Thr-138–Met-158. Topologically, residues Lys-159–Lys-172 are cytoplasmic. A helical membrane pass occupies residues Arg-173–Val-193. The Extracellular segment spans residues Arg-194–Thr-202. The helical transmembrane segment at Arg-203–Arg-221 threads the bilayer. The Cytoplasmic portion of the chain corresponds to Asn-222–Asp-235. The helical transmembrane segment at Ile-236–Ser-256 threads the bilayer. At Thr-257–Tyr-263 the chain is on the extracellular side. Positions Phe-264–Met-287 form an intramembrane region, helical; Pore-forming. Topologically, residues Met-288–Cys-298 are extracellular. The chain crosses the membrane as a helical span at residues Val-299 to Val-319. Residues Val-320 to Gln-445 are Cytoplasmic-facing. Residues Tyr-446 to Leu-466 form a helical membrane-spanning segment. Residues Lys-467 to Tyr-480 lie on the Extracellular side of the membrane. Asn-470 carries an N-linked (GlcNAc...) asparagine glycan. A helical transmembrane segment spans residues Leu-481–Val-501. Over Glu-502–Leu-504 the chain is Cytoplasmic. A helical membrane pass occupies residues Ser-505 to Thr-527. Residues Leu-528–Phe-535 lie on the Extracellular side of the membrane. A helical transmembrane segment spans residues Ile-536 to Leu-550. The Cytoplasmic portion of the chain corresponds to Lys-551 to Ala-569. Residues Ser-570 to Phe-590 form a helical membrane-spanning segment. Residues Asn-591 to Asn-630 lie on the Extracellular side of the membrane. The helical; Pore-forming intramembrane region spans Phe-631–Met-654. Over Glu-655–Thr-671 the chain is Extracellular. The helical transmembrane segment at Phe-672 to Val-692 threads the bilayer. Residues Phe-693–Thr-817 are Cytoplasmic-facing. Positions Ser-770–Leu-794 form a coiled coil. Residues His-785–Thr-817 form a disordered region. Residues Pro-806–Thr-817 are compositionally biased toward polar residues.

The protein belongs to the calcium channel alpha-1 subunit (TC 1.A.1.11) family. Two pore calcium channel subfamily. In terms of assembly, dimer. Interacts with MTOR; the interaction is required for TPCN1 ATP sensitivity. Interacts with STX7, STX8 and STX12. Interacts with JPT2. Found in a complex with LSM12, TPCN1 and TPCN2. N-glycosylated. Mainly expressed in epithelial tissues like lung, kidney, colon, spleen and liver (at protein level).

It is found in the lysosome membrane. The protein localises to the endosome membrane. The protein resides in the early endosome membrane. Its subcellular location is the recycling endosome membrane. It carries out the reaction Na(+)(in) = Na(+)(out). The catalysed reaction is Ca(2+)(in) = Ca(2+)(out). Its activity is regulated as follows. Na(+) current is inhibited by ATP in a MTORC-dependent manner. ATP sensitivity is independent of PI(3,5)P2. Probably regulated by Mg(2+) ions, cytosolic Mg(2+) selectively inhibits outward current while lysosomal Mg(2+) modestly inhibits both the outward and inward currents. In the absence of Mg(2+), NAADP readily activates TPCN2, with properties similar to PI(3,5)P2. Both current elicited by PI(3,5)P2 as well as NAADP are inhibited by tetrandrine. Functionally, intracellular channel initially characterized as a non-selective Ca(2+)-permeable channel activated by NAADP (nicotinic acid adenine dinucleotide phosphate), it is also a voltage-gated highly-selective Na(+) channel activated directly by PI(3,5)P2 (phosphatidylinositol 3,5-bisphosphate) that senses pH changes and confers electrical excitability to organelles. Localizes to the early and recycling endosomes membranes where it plays a role in the uptake and processing of proteins and regulates organellar membrane excitability, membrane trafficking and pH homeostasis. Ion selectivity is not fixed but rather agonist-dependent and under defined ionic conditions, can be readily activated by both NAADP and PI(3,5)P2. Required for mTOR-dependent nutrient sensing. This Mus musculus (Mouse) protein is Two pore calcium channel protein 1.